The chain runs to 692 residues: E3 ubiquitin-protein ligase brl1 (692 aa).

A coiled-coil region spans residues 302 to 370 (SNEEKIESIN…RNERDSLVAK (69 aa)). Residues 639–679 (CSVCNFSNWKSKLIPNCGHAFCSNCMEPFYEHKTSTCPQCE) form an RING-type zinc finger.

This sequence belongs to the BRE1 family. Component of the histone H2B ubiquitin ligase complex (HULC) composed of at least brl1, brl2, rhp6 and shf1.

Its subcellular location is the nucleus. It catalyses the reaction S-ubiquitinyl-[E2 ubiquitin-conjugating enzyme]-L-cysteine + [acceptor protein]-L-lysine = [E2 ubiquitin-conjugating enzyme]-L-cysteine + N(6)-ubiquitinyl-[acceptor protein]-L-lysine.. It participates in protein modification; protein ubiquitination. E3 ubiquitin-protein ligase which belongs to the histone H2B ubiquitin ligase complex (HULC) which mediates monoubiquitination of histone H2B to form H2BK123ub1. H2BK123ub1 gives a specific tag for epigenetic transcriptional activation and is also a prerequisite for H3K4me and H3K79me formation. In Schizosaccharomyces pombe (strain 972 / ATCC 24843) (Fission yeast), this protein is E3 ubiquitin-protein ligase brl1 (brl1).